Consider the following 370-residue polypeptide: (5-formylfuran-3-yl)methyl phosphate transaminase (370 aa).

Lys-222 bears the N6-(pyridoxal phosphate)lysine mark.

The protein belongs to the class-I pyridoxal-phosphate-dependent aminotransferase family. Homodimer. It depends on pyridoxal 5'-phosphate as a cofactor.

It is found in the cytoplasm. The enzyme catalyses 4-(hydroxymethyl)-2-furancarboxaldehyde phosphate + L-alanine = [5-(aminomethyl)-3-furyl]methyl phosphate + pyruvate. The protein operates within cofactor biosynthesis; methanofuran biosynthesis. Catalyzes the transamination reaction between 4-(hydroxymethyl)-2-furancarboxaldehyde phosphate (4-HFC-P) and alanine to produce pyruvate and 5-(aminomethyl)-3-furanmethanol phosphate (F1-P), the precursor for the furan moiety in methanofuran. The sequence is that of (5-formylfuran-3-yl)methyl phosphate transaminase from Methanocaldococcus jannaschii (strain ATCC 43067 / DSM 2661 / JAL-1 / JCM 10045 / NBRC 100440) (Methanococcus jannaschii).